Here is a 217-residue protein sequence, read N- to C-terminus: MSKLRVGIINYGVGNLGSVQNAFAFIQTHFSDVLPHTLEIKVESHPERLQDYDKLLLPGVGAFGNAMTHLKNTHLDEAIREFVQSGKFLIGICLGMQLLFEQSEEFGNHKGLGLIEGKVVGFEHIAPLKVPHIGWNSCNFTPEGKHSKLFRGIADGSFFYFVHSFHIQTQPQFILAQCTYGYPFGAIVHKDNLFAIQAHPEKSHNVGLRLLANFLTL.

In terms of domain architecture, Glutamine amidotransferase type-1 spans 5-217 (RVGIINYGVG…LRLLANFLTL (213 aa)). Cysteine 93 serves as the catalytic Nucleophile. Active-site residues include histidine 199 and glutamate 201.

As to quaternary structure, heterodimer of HisH and HisF.

It localises to the cytoplasm. It carries out the reaction 5-[(5-phospho-1-deoxy-D-ribulos-1-ylimino)methylamino]-1-(5-phospho-beta-D-ribosyl)imidazole-4-carboxamide + L-glutamine = D-erythro-1-(imidazol-4-yl)glycerol 3-phosphate + 5-amino-1-(5-phospho-beta-D-ribosyl)imidazole-4-carboxamide + L-glutamate + H(+). The enzyme catalyses L-glutamine + H2O = L-glutamate + NH4(+). It participates in amino-acid biosynthesis; L-histidine biosynthesis; L-histidine from 5-phospho-alpha-D-ribose 1-diphosphate: step 5/9. Functionally, IGPS catalyzes the conversion of PRFAR and glutamine to IGP, AICAR and glutamate. The HisH subunit catalyzes the hydrolysis of glutamine to glutamate and ammonia as part of the synthesis of IGP and AICAR. The resulting ammonia molecule is channeled to the active site of HisF. The sequence is that of Imidazole glycerol phosphate synthase subunit HisH from Helicobacter hepaticus (strain ATCC 51449 / 3B1).